The sequence spans 242 residues: Peptidyl-prolyl cis-trans isomerase FKBP20-2, chloroplastic (242 aa).

A chloroplast-targeting transit peptide spans methionine 1–cysteine 31. A thylakoid-targeting transit peptide spans cysteine 32–alanine 67. In terms of domain architecture, PPIase FKBP-type spans glycine 138–glutamine 225. Residues cysteine 227 and cysteine 241 are joined by a disulfide bond.

It belongs to the FKBP-type PPIase family. Interacts in vitro with LTO1.

It is found in the plastid. The protein localises to the chloroplast thylakoid lumen. It carries out the reaction [protein]-peptidylproline (omega=180) = [protein]-peptidylproline (omega=0). PPIases accelerate the folding of proteins. It catalyzes the cis-trans isomerization of proline imidic peptide bonds in oligopeptides. Involved in the accumulation of the PSII complex. The sequence is that of Peptidyl-prolyl cis-trans isomerase FKBP20-2, chloroplastic from Arabidopsis thaliana (Mouse-ear cress).